Reading from the N-terminus, the 196-residue chain is Holliday junction branch migration complex subunit RuvA (196 aa).

The domain I stretch occupies residues 1–63 (MINKIYGKIV…DDDVKLFGFL (63 aa)). Positions 64–142 (NISEREVFEN…KGDESSSYML (79 aa)) are domain II. A region of interest (flexible linker) is located at residue lysine 143. The domain III stretch occupies residues 143–196 (KFKELEQSIVNMGFDRKLVVVAFREIMLSDKFLILKEAEQEQFLFTETLKRLSV).

It belongs to the RuvA family. In terms of assembly, homotetramer. Forms an RuvA(8)-RuvB(12)-Holliday junction (HJ) complex. HJ DNA is sandwiched between 2 RuvA tetramers; dsDNA enters through RuvA and exits via RuvB. An RuvB hexamer assembles on each DNA strand where it exits the tetramer. Each RuvB hexamer is contacted by two RuvA subunits (via domain III) on 2 adjacent RuvB subunits; this complex drives branch migration. In the full resolvosome a probable DNA-RuvA(4)-RuvB(12)-RuvC(2) complex forms which resolves the HJ.

Its subcellular location is the cytoplasm. Functionally, the RuvA-RuvB-RuvC complex processes Holliday junction (HJ) DNA during genetic recombination and DNA repair, while the RuvA-RuvB complex plays an important role in the rescue of blocked DNA replication forks via replication fork reversal (RFR). RuvA specifically binds to HJ cruciform DNA, conferring on it an open structure. The RuvB hexamer acts as an ATP-dependent pump, pulling dsDNA into and through the RuvAB complex. HJ branch migration allows RuvC to scan DNA until it finds its consensus sequence, where it cleaves and resolves the cruciform DNA. The protein is Holliday junction branch migration complex subunit RuvA of Borrelia recurrentis (strain A1).